A 380-amino-acid chain; its full sequence is Glucose-1-phosphate adenylyltransferase (380 aa).

Alpha-D-glucose 1-phosphate is bound by residues Gly-164, 179–180 (EK), and Ser-190.

It belongs to the bacterial/plant glucose-1-phosphate adenylyltransferase family. As to quaternary structure, homotetramer.

The catalysed reaction is alpha-D-glucose 1-phosphate + ATP + H(+) = ADP-alpha-D-glucose + diphosphate. Its pathway is glycan biosynthesis; glycogen biosynthesis. Its function is as follows. Involved in the biosynthesis of ADP-glucose, a building block required for the elongation reactions to produce glycogen. Catalyzes the reaction between ATP and alpha-D-glucose 1-phosphate (G1P) to produce pyrophosphate and ADP-Glc. The protein is Glucose-1-phosphate adenylyltransferase of Streptococcus pneumoniae (strain 70585).